Consider the following 199-residue polypeptide: Inducible T-cell costimulator (199 aa).

A signal peptide spans 1–20 (MKSGLWYFFLFCLRIKVLTG). The Extracellular segment spans residues 21–140 (EINGSANYEM…YESQLCCQLK (120 aa)). Positions 30–132 (MFIFHNGGVQ…LTGGYLHIYE (103 aa)) constitute an Ig-like V-type domain. 2 disulfide bridges follow: C42/C109 and C63/C83. N89 and N110 each carry an N-linked (GlcNAc...) asparagine glycan. The helical transmembrane segment at 141-161 (FWLPIGCAAFVVVCILGCILI) threads the bilayer. Residues 162 to 199 (CWLTKKKYSSSVHDPNGEYMFMRAVNTAKKSRLTDVTL) are Cytoplasmic-facing.

Homodimer; disulfide-linked. Interacts with ICOSLG. Interacts with PIK3R1. Interacts with TBK1; this interaction is critical for the maturation of T follicular regulatory cells. Post-translationally, N-glycosylated. Activated T-cells. Highly expressed on tonsillar T-cells, which are closely associated with B-cells in the apical light zone of germinal centers, the site of terminal B-cell maturation. Expressed at lower levels in thymus, lung, lymph node and peripheral blood leukocytes. Expressed in the medulla of fetal and newborn thymus.

The protein localises to the cell membrane. The protein resides in the secreted. In terms of biological role, stimulatory receptor expressed in activated or antigen-experienced T-cells that plays an important role in the immune response. Upon binding to its ligand ICOSL expressed on antigen presenting cells (APCs), delivers costimulatory signals that enhances all basic T-cell responses to a foreign antigen, namely proliferation, secretion of lymphokines including IL10, up-regulation of molecules that mediate cell-cell interaction, and effective help for antibody secretion by B-cells. Also acts as a costimulatory receptor critical for the differentiation of T follicular regulatory cells upon immune challenges such as viral infection. Mechanistically, potentiates TCR-induced calcium flux by augmenting PLCG1 activation and actin remodeling. In addition, activates PI3K signaling pathways independently of calcium flux. Essential both for efficient interaction between T and B-cells and for normal antibody responses to T-cell dependent antigens. Prevents the apoptosis of pre-activated T-cells. Plays a critical role in CD40-mediated class switching of immunoglobin isotypes. In Homo sapiens (Human), this protein is Inducible T-cell costimulator (ICOS).